A 77-amino-acid polypeptide reads, in one-letter code: Large ribosomal subunit protein uL29 (77 aa).

This sequence belongs to the universal ribosomal protein uL29 family.

The sequence is that of Large ribosomal subunit protein uL29 from Corynebacterium jeikeium (strain K411).